The following is a 90-amino-acid chain: Small ribosomal subunit protein uS17 (90 aa).

This sequence belongs to the universal ribosomal protein uS17 family. Part of the 30S ribosomal subunit.

Its function is as follows. One of the primary rRNA binding proteins, it binds specifically to the 5'-end of 16S ribosomal RNA. The sequence is that of Small ribosomal subunit protein uS17 from Burkholderia thailandensis (strain ATCC 700388 / DSM 13276 / CCUG 48851 / CIP 106301 / E264).